The primary structure comprises 127 residues: Large ribosomal subunit protein bL21 (127 aa).

The disordered stretch occupies residues 102 to 127; it reads TDNAKPTKGPRPKKAKAEAPAADAAE.

Belongs to the bacterial ribosomal protein bL21 family. In terms of assembly, part of the 50S ribosomal subunit. Contacts protein L20.

In terms of biological role, this protein binds to 23S rRNA in the presence of protein L20. The chain is Large ribosomal subunit protein bL21 from Bradyrhizobium sp. (strain BTAi1 / ATCC BAA-1182).